Here is a 394-residue protein sequence, read N- to C-terminus: Xylose isomerase (394 aa).

Catalysis depends on residues His-54 and Asp-57. Residues Glu-181, Glu-217, His-220, Asp-245, Asp-255, Asp-257, and Asp-292 each contribute to the Mg(2+) site.

Belongs to the xylose isomerase family. In terms of assembly, homotetramer. Mg(2+) is required as a cofactor.

The protein localises to the cytoplasm. The catalysed reaction is alpha-D-xylose = alpha-D-xylulofuranose. The protein is Xylose isomerase (xylA) of Actinoplanes missouriensis (strain ATCC 14538 / DSM 43046 / CBS 188.64 / JCM 3121 / NBRC 102363 / NCIMB 12654 / NRRL B-3342 / UNCC 431).